Reading from the N-terminus, the 97-residue chain is DNA-directed RNA polymerase subunit omega (97 aa).

This sequence belongs to the RNA polymerase subunit omega family. As to quaternary structure, the RNAP catalytic core consists of 2 alpha, 1 beta, 1 beta' and 1 omega subunit. When a sigma factor is associated with the core the holoenzyme is formed, which can initiate transcription.

It carries out the reaction RNA(n) + a ribonucleoside 5'-triphosphate = RNA(n+1) + diphosphate. In terms of biological role, promotes RNA polymerase assembly. Latches the N- and C-terminal regions of the beta' subunit thereby facilitating its interaction with the beta and alpha subunits. The protein is DNA-directed RNA polymerase subunit omega of Coxiella burnetii (strain CbuK_Q154) (Coxiella burnetii (strain Q154)).